Reading from the N-terminus, the 1841-residue chain is MAKKKFSALEISLIVLFIIVTAIAIALVTVLATKVPAVEEIKSPTPTSNSTPTSTPTSTSTPTSTSTPSPGKCPPEQGEPINERINCIPEQHPTKAICEERGCCWRPWNNTVIPWCFFADNHGYNAESITNENAGLKATLNRIPSPTLFGEDIKSVILTTQTQTGNRFRFKITDPNNKRYEVPHQFVKEETGIPAADTLYDVQVSENPFSIKVIRKSNNKVLCDTSVGPLLYSNQYLQISTRLPSEYIYGFGGHIHKRFRHDLYWKTWPIFTRDEIPGDNNHNLYGHQTFFMGIGDTSGKSYGVFLMNSNAMEVFIQPTPIITYRVTGGILDFYIFLGDTPEQVVQQYQEVHWRPAMPAYWNLGFQLSRWNYGSLDTVSEVVRRNREAGIPYDAQVTDIDYMEDHKEFTYDRVKFNGLPEFAQDLHNHGKYIIILDPAISINKRANGAEYQTYVRGNEKNVWVNESDGTTPLIGEVWPGLTVYPDFTNPQTIEWWANECNLFHQQVEYDGLWIDMNEVSSFIQGSLNLKGVLLIVLNYPPFTPGILDKVMYSKTLCMDAVQHWGKQYDVHSLYGYSMAIATEQAVERVFPNKRSFILTRSTFGGSGRHANHWLGDNTASWEQMEWSITGMLEFGIFGMPLVGATSCGFLADTTEELCRRWMQLGAFYPFSRNHNAEGYMEQDPAYFGQDSSRHYLTIRYTLLPFLYTLFYRAHMFGETVARPFLYEFYDDTNSWIEDTQFLWGPALLITPVLRPGVENVSAYIPNATWYDYETGIKRPWRKERINMYLPGDKIGLHLRGGYIIPTQEPDVTTTASRKNPLGLIVALDDNQAAKGELFWDDGESKDSIEKKMYILYTFSVSNNELVLNCTHSSYAEGTSLAFKTIKVLGLREDVRSITVGENDQQMATHTNFTFDSANKILSITALNFNLAGSFIVRWCRTFSDNEKFTCYPDVGTATEGTCTQRGCLWQPVSGLSNVPPYYFPPENNPYTLTSIQPLPTGITAELQLNPPNARIKLPSNPISTLRVGVKYHPNDMLQFKIYDAQHKRYEVPVPLNIPDTPTSSNERLYDVEIKENPFGIQVRRRSSGKLIWDSRLPGFGFNDQFIQISTRLPSNYLYGFGEVEHTAFKRDLNWHTWGMFTRDQPPGYKLNSYGFHPYYMALENEGNAHGVLLLNSNGMDVTFQPTPALTYRTIGGILDFYMFLGPTPEIATRQYHEVIGFPVMPPYWALGFQLCRYGYRNTSEIEQLYNDMVAANIPYDVQYTDINYMERQLDFTIGERFKTLPEFVDRIRKDGMKYIVILAPAISGNETQPYPAFERGIQKDVFVKWPNTNDICWPKVWPDLPNVTIDETITEDEAVNASRAHVAFPDFFRNSTLEWWAREIYDFYNEKMKFDGLWIDMNEPSSFGIQMGGKVLNECRRMMTLNYPPVFSPELRVKEGEGASISEAMCMETEHILIDGSSVLQYDVHNLYGWSQVKPTLDALQNTTGLRGIVISRSTYPTTGRWGGHWLGDNYTTWDNLEKSLIGMLELNLFGIPYIGADICGVFHDSGYPSLYFVGIQVGAFYPYPRESPTINFTRSQDPVSWMKLLLQMSKKVLEIRYTLLPYFYTQMHEAHAHGGTVIRPLMHEFFDDKETWEIYKQFLWGPAFMVTPVVEPFRTSVTGYVPKARWFDYHTGADIKLKGILHTFSAPFDTINLHVRGGYILPCQEPARNTHLSRQNYMKLIVAADDNQMAQGTLFGDDGESIDTYERGQYTSIQFNLNQTTLTSTVLANGYKNKQEMRLGSIHIWGKGTLRISNANLVYGGRKHQPPFTQEEAKETLIFDLKNMNVTLDEPIQITWS.

Topologically, residues 1 to 12 are cytoplasmic; the sequence is MAKKKFSALEIS. Ser-7 carries the post-translational modification Phosphoserine; by PKA. A helical; Signal-anchor for type II membrane protein membrane pass occupies residues 13–32; the sequence is LIVLFIIVTAIAIALVTVLA. Residues 33–1841 lie on the Lumenal side of the membrane; the sequence is TKVPAVEEIK…LDEPIQITWS (1809 aa). The segment at 42–81 is disordered; it reads KSPTPTSNSTPTSTPTSTSTPTSTSTPSPGKCPPEQGEPI. The segment covering 43-70 has biased composition (low complexity); sequence SPTPTSNSTPTSTPTSTSTPTSTSTPSP. The P-type 1 domain occupies 71-120; sequence GKCPPEQGEPINERINCIPEQHPTKAICEERGCCWRPWNNTVIPWCFFAD. 3 disulfide bridges follow: Cys-73–Cys-104, Cys-87–Cys-103, and Cys-98–Cys-116. N-linked (GlcNAc...) asparagine glycosylation occurs at Asn-109. Residues 120–1013 are isomaltase; it reads DNHGYNAESI…ELQLNPPNAR (894 aa). Substrate is bound by residues Asp-274 and Asp-398. 2 positions are modified to sulfotyrosine: Tyr-401 and Tyr-410. Residue Asn-464 is glycosylated (N-linked (GlcNAc...) asparagine). Asp-514 serves as the catalytic Nucleophile; for isomaltase activity. Arg-599 contacts substrate. The active-site For isomaltase activity is the Asp-615. A disulfide bridge links Cys-646 with Cys-657. Residue His-673 participates in substrate binding. N-linked (GlcNAc...) asparagine glycosylation is found at Asn-758, Asn-765, Asn-867, and Asn-910. In terms of domain architecture, P-type 2 spans 936–984; sequence RWCRTFSDNEKFTCYPDVGTATEGTCTQRGCLWQPVSGLSNVPPYYFPP. Residues 1014–1841 form a sucrase region; the sequence is IKLPSNPIST…LDEPIQITWS (828 aa). Residues Asn-1240, Asn-1308, Asn-1345, Asn-1359, and Asn-1373 are each glycosylated (N-linked (GlcNAc...) asparagine). Tyr-1387 is modified (sulfotyrosine). Residue Asp-1399 is the Nucleophile; for sucrase activity of the active site. Glu-1402 serves as the catalytic For sucrase activity. N-linked (GlcNAc...) asparagine glycosylation occurs at Asn-1485. Asp-1512 serves as the catalytic Proton donor; for sucrase activity. Asn-1513, Asn-1575, Asn-1762, and Asn-1829 each carry an N-linked (GlcNAc...) asparagine glycan.

It belongs to the glycosyl hydrolase 31 family. In terms of assembly, the resulting sucrase and isomaltase subunits stay associated with one another in a complex by non-covalent linkages. Post-translationally, the precursor is proteolytically cleaved when exposed to pancreatic proteases in the intestinal lumen. Sulfated.

Its subcellular location is the apical cell membrane. It carries out the reaction Hydrolysis of sucrose and maltose by an alpha-D-glucosidase-type action.. It catalyses the reaction Hydrolysis of (1-&gt;6)-alpha-D-glucosidic linkages in some oligosaccharides produced from starch and glycogen by alpha-amylase, and in isomaltose.. Plays an important role in the final stage of carbohydrate digestion. Isomaltase activity is specific for both alpha-1,4- and alpha-1,6-oligosaccharides. This Rattus norvegicus (Rat) protein is Sucrase-isomaltase, intestinal (Si).